The following is a 268-amino-acid chain: Diaminopimelate epimerase (268 aa).

Substrate-binding residues include Asn-13, Gln-46, and Asn-64. Cys-73 (proton donor) is an active-site residue. Substrate contacts are provided by residues 74 to 75 (GN), Asn-148, Asn-181, and 199 to 200 (ER). The Proton acceptor role is filled by Cys-208. 209–210 (GT) contacts substrate.

Belongs to the diaminopimelate epimerase family. Homodimer.

It localises to the cytoplasm. The enzyme catalyses (2S,6S)-2,6-diaminopimelate = meso-2,6-diaminopimelate. It participates in amino-acid biosynthesis; L-lysine biosynthesis via DAP pathway; DL-2,6-diaminopimelate from LL-2,6-diaminopimelate: step 1/1. Catalyzes the stereoinversion of LL-2,6-diaminopimelate (L,L-DAP) to meso-diaminopimelate (meso-DAP), a precursor of L-lysine and an essential component of the bacterial peptidoglycan. The chain is Diaminopimelate epimerase from Sphingopyxis alaskensis (strain DSM 13593 / LMG 18877 / RB2256) (Sphingomonas alaskensis).